A 292-amino-acid chain; its full sequence is Seed lectin (292 aa).

The signal sequence occupies residues 1–37 (MATSNSRPHLLQTHKPFSVVLAISITFFLLLLNKVNS). Residues Asn82 and Asn154 are each glycosylated (N-linked (GlcNAc...) asparagine). Residues Asp163 and Asp165 each coordinate Mn(2+). Asp165, His167, Asn169, and Asp172 together coordinate Ca(2+). Residues Asp172 and His177 each coordinate Mn(2+). An N-linked (GlcNAc...) asparagine glycan is attached at Asn186.

This sequence belongs to the leguminous lectin family.

Functionally, mannose/glucose-specific lectin. The chain is Seed lectin from Styphnolobium japonicum (Japanese pagoda tree).